Consider the following 233-residue polypeptide: tRNA (guanine-N(7)-)-methyltransferase (233 aa).

4 residues coordinate S-adenosyl-L-methionine: glutamate 64, glutamate 89, aspartate 116, and aspartate 138. The active site involves aspartate 138. Residues lysine 142, aspartate 174, and 212–215 (TRYE) each bind substrate.

It belongs to the class I-like SAM-binding methyltransferase superfamily. TrmB family.

The enzyme catalyses guanosine(46) in tRNA + S-adenosyl-L-methionine = N(7)-methylguanosine(46) in tRNA + S-adenosyl-L-homocysteine. Its pathway is tRNA modification; N(7)-methylguanine-tRNA biosynthesis. Functionally, catalyzes the formation of N(7)-methylguanine at position 46 (m7G46) in tRNA. The sequence is that of tRNA (guanine-N(7)-)-methyltransferase from Rhizobium johnstonii (strain DSM 114642 / LMG 32736 / 3841) (Rhizobium leguminosarum bv. viciae).